The chain runs to 240 residues: MNERSTPQALTGPVIRAERLGKTYSEGKLLTQVFDGLDLQVMRGETVAIVGASGAGKSTLLHLLGGLDVPTAGEVYVAGQRMSALSDGDRGRLRNKTLGFIYQFHHLLPEFTALENVMMPVLLSGQSVCSGQMRAQMLLEAVELGHRLNYKPSELSGGERQRAAVARALANSPDCVLGDEPTGNLDNRTASTVFELMLELNRAQRTSLVLVTHDRGLARCLDRVLELYQGGLRELTSAEV.

Positions 15 to 240 (IRAERLGKTY…GLRELTSAEV (226 aa)) constitute an ABC transporter domain. 51–58 (GASGAGKS) contacts ATP.

This sequence belongs to the ABC transporter superfamily. Lipoprotein translocase (TC 3.A.1.125) family. The complex is composed of two ATP-binding proteins (LolD) and two transmembrane proteins (LolC and LolE).

It localises to the cell inner membrane. Part of the ABC transporter complex LolCDE involved in the translocation of mature outer membrane-directed lipoproteins, from the inner membrane to the periplasmic chaperone, LolA. Responsible for the formation of the LolA-lipoprotein complex in an ATP-dependent manner. The polypeptide is Lipoprotein-releasing system ATP-binding protein LolD (Xylella fastidiosa (strain 9a5c)).